Here is a 205-residue protein sequence, read N- to C-terminus: Putative 3-methyladenine DNA glycosylase (205 aa).

This sequence belongs to the DNA glycosylase MPG family.

The polypeptide is Putative 3-methyladenine DNA glycosylase (Bacillus cereus (strain AH187)).